Here is a 556-residue protein sequence, read N- to C-terminus: Putative D-arabinono-1,4-lactone oxidase (556 aa).

An FAD-binding PCMH-type domain is found at 47–217 (FTSLPELYIQ…TEVTFKAVPA (171 aa)). H84 carries the pros-8alpha-FAD histidine modification.

Belongs to the oxygen-dependent FAD-linked oxidoreductase family. FAD is required as a cofactor.

Its subcellular location is the mitochondrion membrane. It carries out the reaction D-arabinono-1,4-lactone + O2 = dehydro-D-arabinono-1,4-lactone + H2O2 + H(+). Its pathway is cofactor biosynthesis; D-erythroascorbate biosynthesis; dehydro-D-arabinono-1,4-lactone from D-arabinose: step 2/2. The polypeptide is Putative D-arabinono-1,4-lactone oxidase (alo-1) (Neurospora crassa (strain ATCC 24698 / 74-OR23-1A / CBS 708.71 / DSM 1257 / FGSC 987)).